We begin with the raw amino-acid sequence, 272 residues long: ATP synthase subunit a (272 aa).

5 helical membrane passes run 41–61, 101–121, 143–165, 221–241, and 243–263; these read VLNIDSMFFSLLLGAIFLLIF, LIAPLALTIFVWVFLMNLMDL, VPSADVNITLSMALGVFILILYY, LIFILIAGLLPWWSQWILNVP, and AIFHILIITLQAFIFMVLTIV.

Belongs to the ATPase A chain family. As to quaternary structure, F-type ATPases have 2 components, CF(1) - the catalytic core - and CF(0) - the membrane proton channel. CF(1) has five subunits: alpha(3), beta(3), gamma(1), delta(1), epsilon(1). CF(0) has three main subunits: a(1), b(2) and c(9-12). The alpha and beta chains form an alternating ring which encloses part of the gamma chain. CF(1) is attached to CF(0) by a central stalk formed by the gamma and epsilon chains, while a peripheral stalk is formed by the delta and b chains.

The protein localises to the cell inner membrane. In terms of biological role, key component of the proton channel; it plays a direct role in the translocation of protons across the membrane. The polypeptide is ATP synthase subunit a (Sodalis glossinidius (strain morsitans)).